The chain runs to 193 residues: Sorting nexin-22 (193 aa).

The tract at residues 1–21 (MLEVHIPSVGPEAEGPRQSPE) is disordered. In terms of domain architecture, PX spans 1–118 (MLEVHIPSVG…HFPTDPKASN (118 aa)). Residues Arg43, Ser45, Lys66, and Arg79 each contribute to the a 1,2-diacyl-sn-glycero-3-phospho-(1D-myo-inositol-3-phosphate) site.

This sequence belongs to the sorting nexin family. As to quaternary structure, (Microbial infection) Interacts with P.falciparum (strain 3D7) CK1. As to expression, expressed in erythrocytes (at protein level).

Its subcellular location is the cytoplasmic vesicle membrane. In terms of biological role, may be involved in several stages of intracellular trafficking. Interacts with membranes containing phosphatidylinositol 3-phosphate (PtdIns(3P)). In Homo sapiens (Human), this protein is Sorting nexin-22 (SNX22).